Here is a 199-residue protein sequence, read N- to C-terminus: Guanylyl cyclase-activating protein 1 (199 aa).

Glycine 2 is lipidated: N-myristoyl glycine. Asparagine 3 is subject to Deamidated asparagine. EF-hand domains follow at residues 13 to 48, 50 to 85, 86 to 121, and 129 to 164; these read SATECHQWYKKFMTECPSGQLTLYEFKQFFGLKNLS, SANKYVEQMFETFDFNKDGYIDFMEYVAALSLVLKG, KVDQKLRWYFKLYDVDGNGCIDRGELLNIIKAIRAI, and TAEEFTNMVFDKIDINGDGELSLEEFMEGVQKDEVL. Residues aspartate 63, asparagine 65, aspartate 67, tyrosine 69, glutamate 74, aspartate 99, aspartate 101, asparagine 103, cysteine 105, glutamate 110, aspartate 142, asparagine 144, aspartate 146, glutamate 148, and glutamate 153 each contribute to the Ca(2+) site.

As to expression, retina, in rod and cone outer segments, and pineal gland.

Functionally, stimulates retinal guanylyl cyclase when free calcium ions concentration is low and inhibits guanylyl cyclase when free calcium ions concentration is elevated. This Ca(2+)-sensitive regulation of retinal guanylyl cyclase is a key event in recovery of the dark state of rod photoreceptors following light exposure. In Gallus gallus (Chicken), this protein is Guanylyl cyclase-activating protein 1 (GUCA1A).